The primary structure comprises 475 residues: MSPQTETKASVGFKAGVKDYKLTYYTPDYVTKDTDILAAFRVTPQPGVPPEEAGAAVAAESSTGTWTAVWTDGLTSLDRYKGRCYNIEPVAGEENQYICYVAYPLDLFEEGSVTNMFTSIVGNVFGFKALRALRLEDLRIPPAYTKTFQGPPHGIQVERDKLNKYGRPLLGCTIKPKLGLSAKNYGRAVYECLRGGLDFTKDDENVNSQPFMRWRDRFLFCAEALYKAQAETGEIKGHYLNATAGTCEEMLKRAVFARELGVPIVMHDYLTGGFTANTTLAHYCRDNGLLLHIHRAMHAVIDRQKNHGMHFRVLAKALRLSGGDHIHAGTVVGKLEGERDITLGFVDLLRDDFVEKDRSRGIYFTQDWVSIPGVIPVASGGIHVWHMPALTEIFGDDSVLQFGGGTLGHPWGNAPGAVANRVALEACVQARNEGRDLAREGNEIIREASKWSPELAAACEVWKSIKFEFAAMDTL.

Residues 1–2 (MS) constitute a propeptide that is removed on maturation. Pro-3 carries the post-translational modification N-acetylproline. An N6,N6,N6-trimethyllysine modification is found at Lys-14. Residues Asn-123 and Thr-173 each coordinate substrate. Lys-175 acts as the Proton acceptor in catalysis. Substrate is bound at residue Lys-177. The Mg(2+) site is built by Lys-201, Asp-203, and Glu-204. An N6-carboxylysine modification is found at Lys-201. His-294 serves as the catalytic Proton acceptor. 3 residues coordinate substrate: Arg-295, His-327, and Ser-379.

The protein belongs to the RuBisCO large chain family. Type I subfamily. Heterohexadecamer of 8 large chains and 8 small chains; disulfide-linked. The disulfide link is formed within the large subunit homodimers. The cofactor is Mg(2+). In terms of processing, the disulfide bond which can form in the large chain dimeric partners within the hexadecamer appears to be associated with oxidative stress and protein turnover.

The protein localises to the plastid. It is found in the chloroplast. It carries out the reaction 2 (2R)-3-phosphoglycerate + 2 H(+) = D-ribulose 1,5-bisphosphate + CO2 + H2O. The enzyme catalyses D-ribulose 1,5-bisphosphate + O2 = 2-phosphoglycolate + (2R)-3-phosphoglycerate + 2 H(+). Functionally, ruBisCO catalyzes two reactions: the carboxylation of D-ribulose 1,5-bisphosphate, the primary event in carbon dioxide fixation, as well as the oxidative fragmentation of the pentose substrate in the photorespiration process. Both reactions occur simultaneously and in competition at the same active site. The polypeptide is Ribulose bisphosphate carboxylase large chain (Citrus sinensis (Sweet orange)).